We begin with the raw amino-acid sequence, 375 residues long: Amylovoran biosynthesis protein AmsC (375 aa).

9 helical membrane-spanning segments follow: residues 2-22, 31-51, 93-113, 162-182, 208-228, 256-276, 287-307, 309-329, and 337-357; these read AIYW…LAMI, KILI…FAGI, MVLA…LLFI, IAFI…FIVL, LPLV…KKLF, VFGL…LYYF, VYIL…FSDF, IFGG…FAFL, and LLNF…NTIL.

It is found in the cell membrane. It participates in glycan metabolism; exopolysaccharide biosynthesis. Involved in the biosynthesis of amylovoran which functions as a virulence factor. The protein is Amylovoran biosynthesis protein AmsC (amsC) of Erwinia amylovora (Fire blight bacteria).